A 256-amino-acid chain; its full sequence is MVALRLIPCLDVSNGRVVKGVNFVGLRDAGDPVELGCRYSKAGADELVFLDITATYEKRSTLVDMVRRTSESVTIPFTVGGGISSLNGINELLRAGADKVSLNSSAVKDPSLISKGANRFGSQCIVVAIDAKKNKNIPNKWDVYVSGGRNNTGLDAIEWAEKVFEMGAGEILLTSMDGDGTQNGYDIELTKCIADKVPIPVIASGGAGCLRHIKEAFTLGKSSAALLASLLHDGQLTIREIKEYLIKENLPIRPIE.

Catalysis depends on residues D11 and D130.

Belongs to the HisA/HisF family. As to quaternary structure, heterodimer of HisH and HisF.

Its subcellular location is the cytoplasm. The catalysed reaction is 5-[(5-phospho-1-deoxy-D-ribulos-1-ylimino)methylamino]-1-(5-phospho-beta-D-ribosyl)imidazole-4-carboxamide + L-glutamine = D-erythro-1-(imidazol-4-yl)glycerol 3-phosphate + 5-amino-1-(5-phospho-beta-D-ribosyl)imidazole-4-carboxamide + L-glutamate + H(+). Its pathway is amino-acid biosynthesis; L-histidine biosynthesis; L-histidine from 5-phospho-alpha-D-ribose 1-diphosphate: step 5/9. IGPS catalyzes the conversion of PRFAR and glutamine to IGP, AICAR and glutamate. The HisF subunit catalyzes the cyclization activity that produces IGP and AICAR from PRFAR using the ammonia provided by the HisH subunit. The chain is Imidazole glycerol phosphate synthase subunit HisF from Prochlorococcus marinus (strain NATL2A).